The sequence spans 417 residues: Probable glucuronosyltransferase Os01g0926700 (417 aa).

Residues 1–3 (MRR) lie on the Cytoplasmic side of the membrane. The helical; Signal-anchor for type II membrane protein transmembrane segment at 4–24 (WVLAIAILAAAVCFFLGAQAQ) threads the bilayer. Topologically, residues 25 to 417 (EVRQGHQTER…AGPVGDLKPW (393 aa)) are lumenal. 2 N-linked (GlcNAc...) asparagine glycosylation sites follow: Asn-144 and Asn-405.

Belongs to the glycosyltransferase 47 family.

It is found in the golgi apparatus membrane. Its function is as follows. Involved in the synthesis of glucuronoxylan hemicellulose in secondary cell walls. The polypeptide is Probable glucuronosyltransferase Os01g0926700 (Oryza sativa subsp. japonica (Rice)).